The sequence spans 489 residues: Coronin-1B (489 aa).

Serine 2 carries the post-translational modification Phosphoserine. 5 WD repeats span residues 80-120, 130-170, 174-213, 217-260, and 265-305; these read GHTG…LTSP, GHTK…ELYR, LHPD…LVAE, AHEG…EPMA, and DSSN…PYIH. Residues 414-443 form a disordered region; that stretch reads DSRPAMAPGSSRLGAPASTTAAADATPSGS. Low complexity predominate over residues 427 to 443; sequence GAPASTTAAADATPSGS. Positions 449-474 form a coiled coil; the sequence is EAGKLEEVMQELRALRALVKEQGERI.

It belongs to the WD repeat coronin family. In terms of assembly, forms homooligomers, but does not form complexes with the other coronins. Interacts with Arp2/3 complex components, including ACTR2, ARPC1B and ARPC2. Binds actin. Post-translationally, phosphorylation on Ser-2 regulates the interaction with the Arp2/3 complex and cell motility in fibroblasts. Phosphorylation does not seem to affect subcellular location.

It is found in the cytoplasm. The protein resides in the cytoskeleton. The protein localises to the stress fiber. Regulates leading edge dynamics and cell motility in fibroblasts. May be involved in cytokinesis and signal transduction. The sequence is that of Coronin-1B (CORO1B) from Pongo abelii (Sumatran orangutan).